The chain runs to 352 residues: PDZ and LIM domain protein 2 (352 aa).

Residues M1–Q84 enclose the PDZ domain. 2 disordered regions span residues I69–S95 and V108–F141. Polar residues predominate over residues D81–S95. Residues S117–P135 are compositionally biased toward low complexity. Position 124 is a phosphoserine (S124). T126 carries the post-translational modification Phosphothreonine. S127, S129, S134, S137, S143, S161, S197, S203, S213, and S266 each carry phosphoserine. Disordered stretches follow at residues L170 to L214 and E253 to R275. Positions P258–R275 are enriched in low complexity. Positions H284–A344 constitute an LIM zinc-binding domain.

Interacts with alpha-actinins ACTN1 and ACTN4, FLNA and MYH9. Interacts (via LIM zinc-binding domain) with MKRN2.

It localises to the cytoplasm. The protein resides in the cytoskeleton. Functionally, probable adapter protein located at the actin cytoskeleton that promotes cell attachment. Necessary for the migratory capacity of epithelial cells. Overexpression enhances cell adhesion to collagen and fibronectin and suppresses anchorage independent growth. May contribute to tumor cell migratory capacity. The sequence is that of PDZ and LIM domain protein 2 (PDLIM2) from Macaca fascicularis (Crab-eating macaque).